The following is a 419-amino-acid chain: Zinc metalloprotease RasP (419 aa).

The next 4 helical transmembrane spans lie at 4–24 (VIAFILIFGTLVFFHELGHLI), 173–193 (IAAGPIMNFILAYVILVMLGL), 349–369 (LAAFLSINLGIVNLLPIPALD), and 391–411 (EAFVVFIGVAFLMLLMLVVTW). Position 18 (H18) interacts with Zn(2+). E19 is a catalytic residue. Residue H22 coordinates Zn(2+). A PDZ domain is found at 184–269 (AYVILVMLGL…KLTKYVTPEA (86 aa)).

It belongs to the peptidase M50B family. The cofactor is Zn(2+).

Its subcellular location is the cell membrane. Is responsible for Site-2 cleavage of the RsiW anti-sigma factor. This results, after a third proteolytic step catalyzed by the ClpXP protease, in the release of SigW and the transcription activation of the genes under the control of the sigma-W factor. The polypeptide is Zinc metalloprotease RasP (rasP) (Bacillus licheniformis (strain ATCC 14580 / DSM 13 / JCM 2505 / CCUG 7422 / NBRC 12200 / NCIMB 9375 / NCTC 10341 / NRRL NRS-1264 / Gibson 46)).